An 860-amino-acid polypeptide reads, in one-letter code: Leucine--tRNA ligase (860 aa).

A 'HIGH' region motif is present at residues 42–52 (PYPSGRLHMGH). The short motif at 619-623 (KMSKS) is the 'KMSKS' region element. An ATP-binding site is contributed by lysine 622.

It belongs to the class-I aminoacyl-tRNA synthetase family.

It localises to the cytoplasm. The enzyme catalyses tRNA(Leu) + L-leucine + ATP = L-leucyl-tRNA(Leu) + AMP + diphosphate. The sequence is that of Leucine--tRNA ligase from Sodalis glossinidius (strain morsitans).